A 313-amino-acid polypeptide reads, in one-letter code: Esterase mpl1 (313 aa).

Residues serine 174, aspartate 259, and histidine 287 each act as charge relay system in the active site.

Belongs to the LovG family.

It functions in the pathway mycotoxin biosynthesis. Functionally, esterase; part of the gene cluster that mediates the biosynthesis of the mycotoxin citrinin, a hepato-nephrotoxic compound to humans due to inhibition of respiration complex III. The pathway begins with the synthesis of a keto-aldehyde intermediate by the citrinin PKS (pksCT) from successive condensations of 4 malonyl-CoA units, presumably with a simple acetyl-CoA starter unit. Release of the keto-aldehyde intermediate is consistent with the presence of the C-terminal reductive release domain. Mp11 collaborates with pksCT by catalyzing the hydrolysis of ACP-bound acyl intermediates to free the ACP from stalled intermediates. Mpl2 then catalyzes the oxidation of the C-12 methyl of the ketone intermediate to an alcohol intermediate which is further oxidized by the oxidoreductase mpl7 to produce a bisaldehyde intermediate. The fourth catalytic step is catalyzed by the mpl4 aldehyde dehydrogenase. The final transformation is the reduction of C-3 by mpl6 to provide the chemically stable citrinin nucleus. In Monascus purpureus (Red mold), this protein is Esterase mpl1.